We begin with the raw amino-acid sequence, 354 residues long: Uroporphyrinogen decarboxylase (354 aa).

Substrate contacts are provided by residues 27-31 (RQAGR), Asp-77, Tyr-154, Thr-209, and His-327.

Belongs to the uroporphyrinogen decarboxylase family. As to quaternary structure, homodimer.

The protein resides in the cytoplasm. The enzyme catalyses uroporphyrinogen III + 4 H(+) = coproporphyrinogen III + 4 CO2. The protein operates within porphyrin-containing compound metabolism; protoporphyrin-IX biosynthesis; coproporphyrinogen-III from 5-aminolevulinate: step 4/4. Functionally, catalyzes the decarboxylation of four acetate groups of uroporphyrinogen-III to yield coproporphyrinogen-III. This Actinobacillus pleuropneumoniae serotype 5b (strain L20) protein is Uroporphyrinogen decarboxylase.